A 748-amino-acid chain; its full sequence is Catalase-peroxidase (748 aa).

Positions 92–238 (WHSAGTYRTG…LAAVQMGLIY (147 aa)) form a cross-link, tryptophyl-tyrosyl-methioninium (Trp-Tyr) (with M-264). The active-site Proton acceptor is histidine 93. Residues 238-264 (YVNPEGPDGNPDPLLAAKDIRDTFGRM) constitute a cross-link (tryptophyl-tyrosyl-methioninium (Tyr-Met) (with W-92)). Histidine 279 serves as a coordination point for heme b.

Belongs to the peroxidase family. Peroxidase/catalase subfamily. In terms of assembly, homodimer or homotetramer. Heme b is required as a cofactor. Post-translationally, formation of the three residue Trp-Tyr-Met cross-link is important for the catalase, but not the peroxidase activity of the enzyme.

It catalyses the reaction H2O2 + AH2 = A + 2 H2O. The catalysed reaction is 2 H2O2 = O2 + 2 H2O. Its function is as follows. Bifunctional enzyme with both catalase and broad-spectrum peroxidase activity. This is Catalase-peroxidase from Xanthomonas campestris pv. campestris (strain 8004).